The sequence spans 912 residues: Phosphoenolpyruvate carboxylase (912 aa).

Active-site residues include histidine 138 and lysine 575.

The protein belongs to the PEPCase type 1 family. It depends on Mg(2+) as a cofactor.

The catalysed reaction is oxaloacetate + phosphate = phosphoenolpyruvate + hydrogencarbonate. In terms of biological role, forms oxaloacetate, a four-carbon dicarboxylic acid source for the tricarboxylic acid cycle. The chain is Phosphoenolpyruvate carboxylase from Lactobacillus helveticus (strain DPC 4571).